The following is a 450-amino-acid chain: tRNA modification GTPase MnmE (450 aa).

3 residues coordinate (6S)-5-formyl-5,6,7,8-tetrahydrofolate: Arg26, Glu84, and Lys123. The 158-residue stretch at 219 to 376 folds into the TrmE-type G domain; sequence GMHVVLVGQP…LKAKLLEMIG (158 aa). Asn229 contacts K(+). GTP-binding positions include 229-234, 248-254, 273-276, and 357-359; these read NVGKSS, TDIAGTT, DTAG, and SAR. Position 233 (Ser233) interacts with Mg(2+). K(+) is bound by residues Thr248, Ile250, and Thr253. Residue Thr254 coordinates Mg(2+). Position 450 (Lys450) interacts with (6S)-5-formyl-5,6,7,8-tetrahydrofolate.

This sequence belongs to the TRAFAC class TrmE-Era-EngA-EngB-Septin-like GTPase superfamily. TrmE GTPase family. In terms of assembly, homodimer. Heterotetramer of two MnmE and two MnmG subunits. Requires K(+) as cofactor.

The protein resides in the cytoplasm. Functionally, exhibits a very high intrinsic GTPase hydrolysis rate. Involved in the addition of a carboxymethylaminomethyl (cmnm) group at the wobble position (U34) of certain tRNAs, forming tRNA-cmnm(5)s(2)U34. The sequence is that of tRNA modification GTPase MnmE from Chromobacterium violaceum (strain ATCC 12472 / DSM 30191 / JCM 1249 / CCUG 213 / NBRC 12614 / NCIMB 9131 / NCTC 9757 / MK).